A 287-amino-acid polypeptide reads, in one-letter code: Ret finger protein-like 4A (287 aa).

The RING-type; degenerate zinc finger occupies 11–53 (CYFCFRCLESPVYLNCGYICCLKCLDSLEKSPEGDGVLCPTCS). Residues 78-278 (EPQLNFILTM…LSICPVTNPG (201 aa)) enclose the B30.2/SPRY domain.

Interacts with PSMB1, UBE2A and CCNB1. As to expression, expressed in the ovaries and oocytes (at protein level). Expression restricted to gonads. In testis, present at later stages of spermatogeneis and abundant in elongating spermatids.

It is found in the cytoplasm. It localises to the nucleus. The sequence is that of Ret finger protein-like 4A (Rfpl4a) from Mus musculus (Mouse).